Reading from the N-terminus, the 127-residue chain is Large ribosomal subunit protein eL32 (127 aa).

Basic and acidic residues predominate over residues 37-48; sequence KWRKPKGTDSKM. Residues 37–65 form a disordered region; that stretch reads KWRKPKGTDSKMRVKLKGKARSPSIGWSS.

The protein belongs to the eukaryotic ribosomal protein eL32 family.

The chain is Large ribosomal subunit protein eL32 from Thermococcus sibiricus (strain DSM 12597 / MM 739).